Here is a 268-residue protein sequence, read N- to C-terminus: Universal stress protein MT3220 (268 aa).

Residues G13, 107–113, R117, and 120–121 contribute to the ATP site; these read GSVGLDH and SV.

It belongs to the universal stress protein A family.

The protein is Universal stress protein MT3220 of Mycobacterium tuberculosis (strain CDC 1551 / Oshkosh).